The following is a 305-amino-acid chain: Non-homologous end joining protein Ku (305 aa).

One can recognise a Ku domain in the interval serine 16–alanine 202. The tract at residues glycine 263–alanine 305 is disordered.

The protein belongs to the prokaryotic Ku family. As to quaternary structure, homodimer. Interacts with LigD.

Functionally, with LigD forms a non-homologous end joining (NHEJ) DNA repair enzyme, which repairs dsDNA breaks with reduced fidelity. Binds linear dsDNA with 5'- and 3'- overhangs but not closed circular dsDNA nor ssDNA. Recruits and stimulates the ligase activity of LigD. The sequence is that of Non-homologous end joining protein Ku from Acidobacterium capsulatum (strain ATCC 51196 / DSM 11244 / BCRC 80197 / JCM 7670 / NBRC 15755 / NCIMB 13165 / 161).